We begin with the raw amino-acid sequence, 460 residues long: tRNA-2-methylthio-N(6)-dimethylallyladenosine synthase (460 aa).

The 116-residue stretch at 23-138 folds into the MTTase N-terminal domain; sequence RKVYVHTFGC…LPEMVARAER (116 aa). [4Fe-4S] cluster-binding residues include Cys-32, Cys-68, Cys-101, Cys-176, Cys-180, and Cys-183. Residues 162 to 394 form the Radical SAM core domain; it reads ARGRPTAFVT…QAAQRRIAAA (233 aa). Residues 397–460 enclose the TRAM domain; sequence AAELGKVVEV…GGSSLSGTPA (64 aa).

Belongs to the methylthiotransferase family. MiaB subfamily. In terms of assembly, monomer. [4Fe-4S] cluster serves as cofactor.

The protein resides in the cytoplasm. It catalyses the reaction N(6)-dimethylallyladenosine(37) in tRNA + (sulfur carrier)-SH + AH2 + 2 S-adenosyl-L-methionine = 2-methylsulfanyl-N(6)-dimethylallyladenosine(37) in tRNA + (sulfur carrier)-H + 5'-deoxyadenosine + L-methionine + A + S-adenosyl-L-homocysteine + 2 H(+). Catalyzes the methylthiolation of N6-(dimethylallyl)adenosine (i(6)A), leading to the formation of 2-methylthio-N6-(dimethylallyl)adenosine (ms(2)i(6)A) at position 37 in tRNAs that read codons beginning with uridine. The protein is tRNA-2-methylthio-N(6)-dimethylallyladenosine synthase of Anaeromyxobacter sp. (strain Fw109-5).